The sequence spans 491 residues: Cobyric acid synthase (491 aa).

One can recognise a GATase cobBQ-type domain in the interval 250-439 (EVTIAVIRLP…LHGIFDNGAW (190 aa)). The active-site Nucleophile is the cysteine 331. Histidine 431 is a catalytic residue.

It belongs to the CobB/CobQ family. CobQ subfamily.

Its pathway is cofactor biosynthesis; adenosylcobalamin biosynthesis. Its function is as follows. Catalyzes amidations at positions B, D, E, and G on adenosylcobyrinic A,C-diamide. NH(2) groups are provided by glutamine, and one molecule of ATP is hydrogenolyzed for each amidation. The protein is Cobyric acid synthase of Synechococcus elongatus (strain ATCC 33912 / PCC 7942 / FACHB-805) (Anacystis nidulans R2).